Consider the following 128-residue polypeptide: UPF0325 protein KPN78578_01770 (128 aa).

It belongs to the UPF0325 family.

The protein is UPF0325 protein KPN78578_01770 of Klebsiella pneumoniae subsp. pneumoniae (strain ATCC 700721 / MGH 78578).